We begin with the raw amino-acid sequence, 225 residues long: 7-cyano-7-deazaguanine synthase (225 aa).

ATP is bound at residue 9–19 (YSGGLDSTTCL). Zn(2+) is bound by residues Cys188, Cys198, Cys201, and Cys204.

Belongs to the QueC family. Zn(2+) serves as cofactor.

The catalysed reaction is 7-carboxy-7-deazaguanine + NH4(+) + ATP = 7-cyano-7-deazaguanine + ADP + phosphate + H2O + H(+). It participates in purine metabolism; 7-cyano-7-deazaguanine biosynthesis. In terms of biological role, catalyzes the ATP-dependent conversion of 7-carboxy-7-deazaguanine (CDG) to 7-cyano-7-deazaguanine (preQ(0)). The polypeptide is 7-cyano-7-deazaguanine synthase (Citrifermentans bemidjiense (strain ATCC BAA-1014 / DSM 16622 / JCM 12645 / Bem) (Geobacter bemidjiensis)).